Consider the following 403-residue polypeptide: Tryptophan 2,3-dioxygenase (403 aa).

69-73 serves as a coordination point for substrate; that stretch reads FIVIH. The short motif at 133-135 is the PLD motif; required for enzymatic activity element; that stretch reads PLD. Arginine 140 contacts substrate. Histidine 327 provides a ligand contact to heme. Threonine 341 provides a ligand contact to substrate.

Belongs to the tryptophan 2,3-dioxygenase family. As to quaternary structure, homotetramer. Dimer of dimers. Heme is required as a cofactor. As to expression, expressed in body wall muscle cells, hypodermis, PLM neurons and touch-receptor neurons.

The catalysed reaction is L-tryptophan + O2 = N-formyl-L-kynurenine. It functions in the pathway amino-acid degradation; L-tryptophan degradation via kynurenine pathway; L-kynurenine from L-tryptophan: step 1/2. In terms of biological role, heme-dependent dioxygenase that catalyzes the oxidative cleavage of the L-tryptophan (L-Trp) pyrrole ring and converts L-tryptophan to N-formyl-L-kynurenine. Catalyzes the oxidative cleavage of the indole moiety. Involved in regulation of protein homeostasis, longevity and reproducive life span. Specifically regulates proteotoxicity due to age-related aggregation of proteins like alpha-synuclein, via its effects on tryptophan metabolism. This is Tryptophan 2,3-dioxygenase from Caenorhabditis elegans.